A 138-amino-acid chain; its full sequence is Single-stranded DNA-binding protein 4 (138 aa).

An SSB domain is found at methionine 1–glutamate 104. The disordered stretch occupies residues aspartate 107 to phenylalanine 138. An Important for interaction with partner proteins motif is present at residues aspartate 133 to phenylalanine 138.

In terms of assembly, homotetramer.

Plays an important role in DNA replication, recombination and repair. Binds to ssDNA and to an array of partner proteins to recruit them to their sites of action during DNA metabolism. The sequence is that of Single-stranded DNA-binding protein 4 (ssb4) from Streptococcus agalactiae serotype V (strain ATCC BAA-611 / 2603 V/R).